A 466-amino-acid polypeptide reads, in one-letter code: Sushi repeat-containing protein SRPX2 (466 aa).

Residues 1-24 form the signal peptide; that stretch reads MKTGSLTQRGALLLLLLLAPAVTP. 3 Sushi domains span residues 70–120, 121–179, and 263–322; these read ATCY…YCRQ, MRCH…VCVD, and RRCP…VCTP. Intrachain disulfides connect Cys72/Cys106, Cys92/Cys118, Cys123/Cys164, and Cys150/Cys177. The HYR domain occupies 178 to 262; it reads VDIDPPKIRC…SCKFIVKVQV (85 aa). Cystine bridges form between Cys265–Cys307 and Cys293–Cys320.

In terms of assembly, forms homooligomers. Interacts with PLAUR (via the UPAR/Ly6 domains), ADAMTS4 and CTSB. Interacts with HGF; the interaction increases the mitogenic activity of HGF. In terms of processing, contains chondroitin sulfate chains.

It is found in the secreted. It localises to the cytoplasm. The protein resides in the cell surface. Its subcellular location is the synapse. Functionally, acts as a ligand for the urokinase plasminogen activator surface receptor. Plays a role in angiogenesis by inducing endothelial cell migration and the formation of vascular network (cords). Involved in cellular migration and adhesion. Increases the phosphorylation levels of FAK. Interacts with and increases the mitogenic activity of HGF. Promotes synapse formation. The sequence is that of Sushi repeat-containing protein SRPX2 from Rattus norvegicus (Rat).